The sequence spans 129 residues: Protein Turandot B1 (129 aa).

The N-terminal stretch at 1 to 21 is a signal peptide; sequence MNSATSLMCFALLLISPLCMG.

It belongs to the Turandot family.

The protein localises to the secreted. Functionally, a humoral factor that may play a role in stress tolerance. This Drosophila erecta (Fruit fly) protein is Protein Turandot B1 (TotB1).